A 380-amino-acid chain; its full sequence is Glucose-1-phosphate adenylyltransferase (380 aa).

Residues G164, 179 to 180 (EK), and S190 each bind alpha-D-glucose 1-phosphate.

Belongs to the bacterial/plant glucose-1-phosphate adenylyltransferase family. Homotetramer.

It catalyses the reaction alpha-D-glucose 1-phosphate + ATP + H(+) = ADP-alpha-D-glucose + diphosphate. It participates in glycan biosynthesis; glycogen biosynthesis. Involved in the biosynthesis of ADP-glucose, a building block required for the elongation reactions to produce glycogen. Catalyzes the reaction between ATP and alpha-D-glucose 1-phosphate (G1P) to produce pyrophosphate and ADP-Glc. The sequence is that of Glucose-1-phosphate adenylyltransferase from Streptococcus sanguinis (strain SK36).